We begin with the raw amino-acid sequence, 620 residues long: MYND-type zinc finger protein MUB1 (620 aa).

The MYND-type; degenerate zinc-finger motif lies at Asn-514–Cys-555. 4 residues coordinate Zn(2+): Cys-530, Cys-533, His-551, and Cys-555. A compositionally biased stretch (polar residues) spans Met-563 to Val-606. The interval Met-563 to Glu-620 is disordered. The segment covering Ile-610–Glu-620 has biased composition (basic and acidic residues).

This sequence belongs to the MUB1/samB family. Interacts with UBR2 and RPN4.

The protein resides in the cytoplasm. In terms of biological role, involved in the determination of the onset of polarized growth. Required for the ubiquitin-dependent degradation of RPN4. Cooperates with UBR2 to transfer ubiquitin from RAD6 to RPN4. The chain is MYND-type zinc finger protein MUB1 (MUB1) from Saccharomyces cerevisiae (strain ATCC 204508 / S288c) (Baker's yeast).